Here is a 170-residue protein sequence, read N- to C-terminus: Adenine phosphoribosyltransferase (170 aa).

The protein belongs to the purine/pyrimidine phosphoribosyltransferase family. As to quaternary structure, homodimer.

It localises to the cytoplasm. It carries out the reaction AMP + diphosphate = 5-phospho-alpha-D-ribose 1-diphosphate + adenine. It participates in purine metabolism; AMP biosynthesis via salvage pathway; AMP from adenine: step 1/1. In terms of biological role, catalyzes a salvage reaction resulting in the formation of AMP, that is energically less costly than de novo synthesis. The protein is Adenine phosphoribosyltransferase of Mycoplasmopsis pulmonis (strain UAB CTIP) (Mycoplasma pulmonis).